The primary structure comprises 512 residues: tRNA-2-methylthio-N(6)-dimethylallyladenosine synthase (512 aa).

Residues 1–22 (MVAHDAAAGVTGEGAGPPVRRA) form a disordered region. The MTTase N-terminal domain occupies 25 to 141 (RTYQVRTYGC…LPTLLERARH (117 aa)). Positions 34, 70, 104, 178, 182, and 185 each coordinate [4Fe-4S] cluster. Residues 164 to 400 (RESAYAAWVS…IALQEQISLE (237 aa)) enclose the Radical SAM core domain. Residues 403 to 471 (RALVGQAVEV…PHHLIADAGV (69 aa)) form the TRAM domain.

The protein belongs to the methylthiotransferase family. MiaB subfamily. Monomer. It depends on [4Fe-4S] cluster as a cofactor.

It is found in the cytoplasm. It carries out the reaction N(6)-dimethylallyladenosine(37) in tRNA + (sulfur carrier)-SH + AH2 + 2 S-adenosyl-L-methionine = 2-methylsulfanyl-N(6)-dimethylallyladenosine(37) in tRNA + (sulfur carrier)-H + 5'-deoxyadenosine + L-methionine + A + S-adenosyl-L-homocysteine + 2 H(+). Functionally, catalyzes the methylthiolation of N6-(dimethylallyl)adenosine (i(6)A), leading to the formation of 2-methylthio-N6-(dimethylallyl)adenosine (ms(2)i(6)A) at position 37 in tRNAs that read codons beginning with uridine. This Mycobacterium bovis (strain ATCC BAA-935 / AF2122/97) protein is tRNA-2-methylthio-N(6)-dimethylallyladenosine synthase.